Reading from the N-terminus, the 523-residue chain is Signal peptide peptidase-like 2A (523 aa).

The first 25 residues, 1 to 25 (MGLLHSLHAPAAALLWSCLLGLAAA), serve as a signal peptide directing secretion. Topologically, residues 26–175 (QEAILHASTN…PSWPNFDYTL (150 aa)) are lumenal. Residues Asn51, Asn61, Asn69, Asn119, Asn129, and Asn135 are each glycosylated (N-linked (GlcNAc...) asparagine). Residues 70–155 (LTGTALCHLS…KDFKDMKETL (86 aa)) enclose the PA domain. Residues 176–196 (VVIFVIAVFTVALGGYWSGLI) form a helical membrane-spanning segment. Residues 197-224 (ELENMKSVEDAEDRETRKKKDDYLTFSP) lie on the Cytoplasmic side of the membrane. A helical membrane pass occupies residues 225–245 (LTVVVFVVICCIMIVLLYFFY). Over 246–247 (RW) the chain is Lumenal. Residues 248-268 (LVYVMIAIFCIASSMSLYNCL) traverse the membrane as a helical segment. The Cytoplasmic segment spans residues 269–288 (SALIHRMPCGQCTILCCGKN). The helical transmembrane segment at 289–309 (IKVSLIFLSGLCISVAVVWAV) threads the bilayer. Topologically, residues 310–315 (FRNEDR) are lumenal. The chain crosses the membrane as a helical span at residues 316–336 (WAWILQDILGIAFCLNLIKTM). The Cytoplasmic portion of the chain corresponds to 337-344 (KLPNFMSC). Residues 345-365 (VILLGLLLIYDVFFVFITPFI) form a helical membrane-spanning segment. Asp355 is an active-site residue. Over 366–403 (TKNGESIMVELAAGPFENAEKLPVVIRVPKLMGYSVMS) the chain is Lumenal. Residues 404-424 (VCSVPVSVLGFGDIIVPGLLI) traverse the membrane as a helical segment. Asp416 is a catalytic residue. The Cytoplasmic segment spans residues 425–440 (AYCRRFDVQTGSSIYY). Residues 441-461 (ISSTIAYAVGMIITFVVLMVM) traverse the membrane as a helical segment. Over 462 to 463 (KT) the chain is Lumenal. The chain crosses the membrane as a helical span at residues 464 to 484 (GQPALLYLVPCTLITVSVVAW). The PAL motif lies at 466–468 (PAL). The Cytoplasmic segment spans residues 485-523 (SRKEMKKFWKGSSYQVMDHLDYSTNEENPVTTDEQIVQQ). The short motif at 498 to 501 (YQVM) is the YXXo lysosomal targeting motif element.

It belongs to the peptidase A22B family. In terms of assembly, interacts with ITM2B. In terms of processing, glycosylated.

It is found in the late endosome membrane. The protein localises to the lysosome membrane. The protein resides in the membrane. Intramembrane-cleaving aspartic protease (I-CLiP) that cleaves type II membrane signal peptides in the hydrophobic plane of the membrane. Functions in FASLG, ITM2B and TNF processing. Catalyzes the intramembrane cleavage of the anchored fragment of shed TNF-alpha (TNF), which promotes the release of the intracellular domain (ICD) for signaling to the nucleus. Also responsible for the intramembrane cleavage of Fas antigen ligand FASLG, which promotes the release of the intracellular FasL domain (FasL ICD). Essential for degradation of the invariant chain CD74 that plays a central role in the function of antigen-presenting cells in the immune system. Plays a role in the regulation of innate and adaptive immunity. In Mus musculus (Mouse), this protein is Signal peptide peptidase-like 2A.